Reading from the N-terminus, the 125-residue chain is Photosystem II extrinsic protein U (125 aa).

The first 29 residues, 1-29 (MKRLLSWLTGLVVMAGLLFSLATPSGVQA), serve as a signal peptide directing secretion.

This sequence belongs to the PsbU family. As to quaternary structure, PSII is composed of 1 copy each of membrane proteins PsbA, PsbB, PsbC, PsbD, PsbE, PsbF, PsbH, PsbI, PsbJ, PsbK, PsbL, PsbM, PsbT, PsbX, PsbY, PsbZ, Psb30/Ycf12, peripheral proteins PsbO, CyanoQ (PsbQ), PsbU, PsbV and a large number of cofactors. It forms dimeric complexes.

The protein resides in the cellular thylakoid membrane. One of the extrinsic, lumenal subunits of photosystem II (PSII). PSII is a light-driven water plastoquinone oxidoreductase, using light energy to abstract electrons from H(2)O, generating a proton gradient subsequently used for ATP formation. The extrinsic proteins stabilize the structure of photosystem II oxygen-evolving complex (OEC), the ion environment of oxygen evolution and protect the OEC against heat-induced inactivation. This is Photosystem II extrinsic protein U from Synechococcus sp. (strain WH7803).